Reading from the N-terminus, the 160-residue chain is SsrA-binding protein (160 aa).

A disordered region spans residues 131 to 160 (KKEYDKRHTERERDSDRELQRAVRTKGKED).

Belongs to the SmpB family.

Its subcellular location is the cytoplasm. In terms of biological role, required for rescue of stalled ribosomes mediated by trans-translation. Binds to transfer-messenger RNA (tmRNA), required for stable association of tmRNA with ribosomes. tmRNA and SmpB together mimic tRNA shape, replacing the anticodon stem-loop with SmpB. tmRNA is encoded by the ssrA gene; the 2 termini fold to resemble tRNA(Ala) and it encodes a 'tag peptide', a short internal open reading frame. During trans-translation Ala-aminoacylated tmRNA acts like a tRNA, entering the A-site of stalled ribosomes, displacing the stalled mRNA. The ribosome then switches to translate the ORF on the tmRNA; the nascent peptide is terminated with the 'tag peptide' encoded by the tmRNA and targeted for degradation. The ribosome is freed to recommence translation, which seems to be the essential function of trans-translation. This Pseudomonas fluorescens (strain ATCC BAA-477 / NRRL B-23932 / Pf-5) protein is SsrA-binding protein.